The chain runs to 105 residues: DNA-directed RNA polymerase subunit omega (105 aa).

It belongs to the RNA polymerase subunit omega family. The RNAP catalytic core consists of 2 alpha, 1 beta, 1 beta' and 1 omega subunit. When a sigma factor is associated with the core the holoenzyme is formed, which can initiate transcription.

It catalyses the reaction RNA(n) + a ribonucleoside 5'-triphosphate = RNA(n+1) + diphosphate. Promotes RNA polymerase assembly. Latches the N- and C-terminal regions of the beta' subunit thereby facilitating its interaction with the beta and alpha subunits. The sequence is that of DNA-directed RNA polymerase subunit omega from Streptococcus uberis (strain ATCC BAA-854 / 0140J).